Consider the following 305-residue polypeptide: Hepatitis A virus cellular receptor 1 homolog (305 aa).

A signal peptide spans 1–21; it reads MNQIQVFISGLILLLPGAVDS. The Ig-like V-type domain occupies 22 to 122; that stretch reads YVEVKGVVGH…PGWFNDQKVT (101 aa). Residues 22-237 lie on the Extracellular side of the membrane; it reads YVEVKGVVGH…GKPQKNPTKG (216 aa). Cystine bridges form between Cys37/Cys108, Cys49/Cys60, and Cys55/Cys107. The interval 129–185 is disordered; the sequence is PEIPTRPPTRPTTTRPTATGRPTTISTRSTHVPTSIRVSTSTPPTSTHTWTHKPEPT. 2 stretches are compositionally biased toward low complexity: residues 139-152 and 161-177; these read PTTT…RPTT and PTSI…STHT. Asn208 is a glycosylation site (N-linked (GlcNAc...) asparagine). The helical transmembrane segment at 238–258 threads the bilayer; it reads FYVGICIAALLLLLLVSTVAI. Over 259–305 the chain is Cytoplasmic; that stretch reads TRYILMKRKSASLSVVAFRVSKIEALQNAAVVHSRAEDNIYIVEDRP.

It belongs to the immunoglobulin superfamily. TIM family. Interacts with STAM. Interacts with SELPLG. Expressed by stimulated T-cells. Expressed during primary antigen stimulation. Expressed at higher levels on B rather than T-cells, both constitutively and after activation.

Its subcellular location is the cell membrane. Its function is as follows. Phosphatidylserine receptor that plays an important functional role in regulatory B-cells homeostasis including generation, expansion and suppressor functions. As P-selectin/SELPLG ligand, plays a specialized role in activated but not naive T-cell trafficking during inflammatory responses. Controls thereby T-cell accumulation in the inflamed central nervous system (CNS) and the induction of autoimmune disease. Also regulates expression of various anti-inflammatory cytokines and co-inhibitory ligands including IL10. Acts as a regulator of T-cell proliferation. May play a role in kidney injury and repair. This Mus musculus (Mouse) protein is Hepatitis A virus cellular receptor 1 homolog (Havcr1).